The sequence spans 512 residues: MEGSLELSSEAILRFLAERGGRAGHSELVQHFRDVLGGQREQRTRARERFKELVNAVATVRTDPADGTKYVHLKKRFCTGDSPPLEAKLPREPPRIEVTEEPQVPDLAAEPCEGSQLQEANPQLSLGLGGEVSDQEPPAPAQGGAQGKDSPPQEVEAVSWASGPGSSENLKLPPQGEAEGGSSPSGPNTPRSARQNFRDLVLGSSPQLKRSVGPGDGNAGGRSRGGGDSDTASLASSSAEEESSVGASVTLDPLDHAWMLSASEGKWDSLEGLLTCEPGLLSKRDFITGFTCLHWAAKHGRQELLAMLVNFATKHQLPVNINAKSSGGYTALHLAAMHGHVEVVKLLVGAYDADVDIRDYSGRKASQYLSESIAEEIKNLVGALDEDDGDSPAARGGGRWRLSKVLPSHITHKLSPVVEDGAELHHHVPEGWTGGSKAKDSGRKASGSSSGRMKPRLNKIRFRTQIIHTTPSFRDAKPTLEEGEEEEEEEEERSLRGYSSSFKLRPKSNVFG.

2 positions are modified to phosphoserine: Ser-82 and Ser-125. Residues 126 to 248 (LGLGGEVSDQ…AEEESSVGAS (123 aa)) are disordered. Residues 173–186 (PPQGEAEGGSSPSG) show a composition bias toward low complexity. Ser-205 carries the phosphoserine modification. Residues 214–228 (PGDGNAGGRSRGGGD) show a composition bias toward gly residues. A compositionally biased stretch (low complexity) spans 229 to 248 (SDTASLASSSAEEESSVGAS). 2 ANK repeats span residues 288–317 (TGFT…KHQL) and 327–357 (GGYT…DVDI). Arg-395 bears the Omega-N-methylarginine mark. Residues 427-500 (HVPEGWTGGS…EERSLRGYSS (74 aa)) form a disordered region. Residues 453-462 (MKPRLNKIRF) show a composition bias toward basic residues. Positions 481-492 (EEGEEEEEEEEE) are enriched in acidic residues.

The protein belongs to the SOWAH family.

The sequence is that of Ankyrin repeat domain-containing protein SOWAHC (Sowahc) from Mus musculus (Mouse).